The following is a 154-amino-acid chain: Protein aau3 (154 aa).

One can recognise an HTH rrf2-type domain in the interval 2-132 (RLTKQTNYAV…QGYTIDDLVK (131 aa)). [2Fe-2S] cluster contacts are provided by Cys91, Cys99, and Cys105.

The cofactor is [2Fe-2S] cluster.

Required for growth utilizing PHB cycle intermediates. This Rhizobium meliloti (strain 1021) (Ensifer meliloti) protein is Protein aau3 (aau3).